The primary structure comprises 310 residues: ADP-L-glycero-D-manno-heptose-6-epimerase (310 aa).

NADP(+)-binding positions include 10–11 (FI), 31–32 (DN), K38, K53, 75–79 (EGACS), and N92. Y140 serves as the catalytic Proton acceptor. K144 provides a ligand contact to NADP(+). Position 169 (N169) interacts with substrate. NADP(+) is bound by residues V170 and K178. K178 functions as the Proton acceptor in the catalytic mechanism. Residues S180, H187, 201-204 (FEGS), R209, and Y272 each bind substrate.

The protein belongs to the NAD(P)-dependent epimerase/dehydratase family. HldD subfamily. Homopentamer. Requires NADP(+) as cofactor.

The enzyme catalyses ADP-D-glycero-beta-D-manno-heptose = ADP-L-glycero-beta-D-manno-heptose. Its pathway is nucleotide-sugar biosynthesis; ADP-L-glycero-beta-D-manno-heptose biosynthesis; ADP-L-glycero-beta-D-manno-heptose from D-glycero-beta-D-manno-heptose 7-phosphate: step 4/4. The protein operates within bacterial outer membrane biogenesis; LPS core biosynthesis. Functionally, catalyzes the interconversion between ADP-D-glycero-beta-D-manno-heptose and ADP-L-glycero-beta-D-manno-heptose via an epimerization at carbon 6 of the heptose. In Klebsiella pneumoniae, this protein is ADP-L-glycero-D-manno-heptose-6-epimerase.